The primary structure comprises 101 residues: Putative metal transport protein HQ_3622A (101 aa).

Positions 1–32 are cleaved as a signal peptide; sequence MKIISMSMDSWIQRAALMLLGLVIVAPFFGWT. The helical transmembrane segment at 75–95 threads the bilayer; the sequence is IGTLISAGVGTVLTLIVAFGA.

Its subcellular location is the cell membrane. May be involved in metal transport. This Haloquadratum walsbyi (strain DSM 16790 / HBSQ001) protein is Putative metal transport protein HQ_3622A.